Reading from the N-terminus, the 735-residue chain is MSGFDDLGIYYSDSFGGEQPVGDDGQAKKSQLKKRFREFLRQYRVGTDRTGFTFKYRDELKRHYNLGEYWIEVEMEDLASFDEDLADYLYKQPTEHLQLLEEAAQEVADEVTRPRPAGEETIQEIQVMLRSDANPANIRSLKSEQMSHLVKIPGIIIAATAVRAKATKISIQCRSCRNTIGNIAVRPGLEGYAMPRKCNTEQAGRPKCPLDPYFIIPDKCKCVDFQTLKLQESPDAVPHGELPRHMQLYCDRYLCDKVVPGNRVTIMGIYSIRKSGKTSTKGRDRVGVGIRSSYIRVVGIQVDTEGTGRSAAGAITPQEEEEFRRLSAKPDIYETVAKSIAPSIYGSSDIKKAIACLLFGGSRKRLPDGLTRRGDVNLLMLGDPGTAKSQLLKFVERCSPIGVYTSGKGSSAAGLTASVMRDPVSRNFIMEGGAMVLADGGVVCIDEFDKMREDDRVAIHEAMEQQTISIAKAGITTTLNSRCSVLAAANSVYGRWDDTKGEENIDFMPTILSRFDMIFIVKDEHNEQRDMTLAKHVMNVHLSARTQSSSVEGEIDLNTLKKYIAYCRAKCGPRLSAESAEKLKNRYILMRSGARDHERETEKRSSIPITVRQLEAIVRISESLGKMKLQPFATETDVEEALRLFQVSTLDAAMSGSLSGVEGFTTQEDQEMLSRIEKQLKRRFAIGSQVSEHSIIQDFLKQKYPEHAIHKVLHLMMRRGEIQHRLQRKVLYRIK.

The MCM domain maps to 332–538; that stretch reads IYETVAKSIA…RDMTLAKHVM (207 aa). Arg372 contributes to the ADP binding site. Residues 513–516 carry the Arginine finger motif; it reads SRFD.

It belongs to the MCM family. As to quaternary structure, component of the mcm2-7 complex (RLF-M). The complex forms a toroidal hexameric ring with the proposed subunit order mcm2-mcm6-mcm4-mcm7-mcm3-mcm5. The heterodimer of mmcm3/mcm5 interacts with mcm4, mmcm6, mcm7 and weakly with mcm2. Component of the CMG helicase complex, composed of the mcm2-7 complex, the GINS complex and cdc45.

The protein localises to the nucleus. The protein resides in the chromosome. The enzyme catalyses ATP + H2O = ADP + phosphate + H(+). Its function is as follows. Acts as a component of the MCM2-7 complex (MCM complex) which is the replicative helicase essential for 'once per cell cycle' DNA replication initiation and elongation in eukaryotic cells. Core component of CDC45-MCM-GINS (CMG) helicase, the molecular machine that unwinds template DNA during replication, and around which the replisome is built. The active ATPase sites in the MCM2-7 ring are formed through the interaction surfaces of two neighboring subunits such that a critical structure of a conserved arginine finger motif is provided in trans relative to the ATP-binding site of the Walker A box of the adjacent subunit. The six ATPase active sites, however, are likely to contribute differentially to the complex helicase activity. This chain is DNA replication licensing factor mcm5, found in Xenopus tropicalis (Western clawed frog).